The sequence spans 276 residues: uncharacterized protein (276 aa).

7 helical membrane passes run 5–25 (TDLISIIALGLVCAFIGGMLA), 32–52 (PLVGYLVAGIAIGPFTPGFVG), 64–84 (GVILLMFGVGLHFSIGDLLAV), 104–124 (AGLAWGFGWGAGAGLVFGLAL), 149–169 (IAVGWLIVEDLAMVVALVLLP), 193–213 (LWVTLGLTLAKVGVFVAVMLV), and 244–264 (VGIAFASSELFGVSFALGAFF).

This sequence belongs to the monovalent cation:proton antiporter 2 (CPA2) transporter (TC 2.A.37) family.

Its subcellular location is the cell membrane. This is an uncharacterized protein from Methylorubrum extorquens (Methylobacterium dichloromethanicum).